Consider the following 490-residue polypeptide: AP-5 complex subunit mu-1 (490 aa).

Residues 206-476 form the MHD domain; sequence KPQVSISITE…LISSDYYIWN (271 aa).

This sequence belongs to the adaptor complexes medium subunit family. Probably part of the adaptor protein complex 5 (AP-5) a tetramer composed of AP5B1, AP5M1, AP5S1 and AP5Z1. In terms of tissue distribution, expressed in various tumor cell lines including Jurkat, Hep-G2 and HeLa.

It is found in the cytoplasm. Its subcellular location is the cytosol. The protein localises to the late endosome membrane. The protein resides in the lysosome membrane. Its function is as follows. As part of AP-5, a probable fifth adaptor protein complex it may be involved in endosomal transport. According to PubMed:18395520, it may play a role in cell death. In Homo sapiens (Human), this protein is AP-5 complex subunit mu-1 (AP5M1).